The chain runs to 592 residues: Glycosyltransferase 25 family member (592 aa).

Residues 1–13 (MLALLLTTTIVSG) form the signal peptide. N249 and N510 each carry an N-linked (GlcNAc...) asparagine glycan. Composition is skewed to basic and acidic residues over residues 552-563 (RIQEPKKGDKEQ) and 579-592 (GEHD…RSEL). A disordered region spans residues 552 to 592 (RIQEPKKGDKEQLPNAPALLSESGIGQGEHDLETKNRRSEL). A Prevents secretion from ER motif is present at residues 589–592 (RSEL).

This sequence belongs to the glycosyltransferase 25 family.

It is found in the endoplasmic reticulum lumen. The chain is Glycosyltransferase 25 family member from Anopheles gambiae (African malaria mosquito).